We begin with the raw amino-acid sequence, 98 residues long: NADH-ubiquinone oxidoreductase chain 4L (98 aa).

The next 3 membrane-spanning stretches (helical) occupy residues 1–21 (MTTMFFNLLLAFMVALMGVYI), 29–49 (TLLCLEGMMLSIFIMVSLTLL), and 59–79 (FPLILLVFSACEAGVGLALLV).

This sequence belongs to the complex I subunit 4L family. As to quaternary structure, core subunit of respiratory chain NADH dehydrogenase (Complex I) which is composed of 45 different subunits.

The protein localises to the mitochondrion inner membrane. It catalyses the reaction a ubiquinone + NADH + 5 H(+)(in) = a ubiquinol + NAD(+) + 4 H(+)(out). Its function is as follows. Core subunit of the mitochondrial membrane respiratory chain NADH dehydrogenase (Complex I) which catalyzes electron transfer from NADH through the respiratory chain, using ubiquinone as an electron acceptor. Part of the enzyme membrane arm which is embedded in the lipid bilayer and involved in proton translocation. This Zaglossus bruijni (Western long-beaked echidna) protein is NADH-ubiquinone oxidoreductase chain 4L (MT-ND4L).